Consider the following 284-residue polypeptide: Tropomyosin Lep s 1.0101 (284 aa).

Residues 1-273 are a coiled coil; sequence MEAIKKKMQA…KDRYRALADE (273 aa). Over residues 155–171 the composition is skewed to basic and acidic residues; the sequence is AEDADGKSDEVSRKMAQ. The segment at 155 to 187 is disordered; the sequence is AEDADGKSDEVSRKMAQVEDDLEVAEDRVKSGD.

It belongs to the tropomyosin family. In terms of assembly, homodimer.

Tropomyosin, in association with the troponin complex, plays a central role in the calcium dependent regulation of muscle contraction. This chain is Tropomyosin Lep s 1.0101, found in Lepisma saccharinum (Silverfish).